Consider the following 490-residue polypeptide: Aspartyl/glutamyl-tRNA(Asn/Gln) amidotransferase subunit B (490 aa).

This sequence belongs to the GatB/GatE family. GatB subfamily. As to quaternary structure, heterotrimer of A, B and C subunits.

The enzyme catalyses L-glutamyl-tRNA(Gln) + L-glutamine + ATP + H2O = L-glutaminyl-tRNA(Gln) + L-glutamate + ADP + phosphate + H(+). It catalyses the reaction L-aspartyl-tRNA(Asn) + L-glutamine + ATP + H2O = L-asparaginyl-tRNA(Asn) + L-glutamate + ADP + phosphate + 2 H(+). In terms of biological role, allows the formation of correctly charged Asn-tRNA(Asn) or Gln-tRNA(Gln) through the transamidation of misacylated Asp-tRNA(Asn) or Glu-tRNA(Gln) in organisms which lack either or both of asparaginyl-tRNA or glutaminyl-tRNA synthetases. The reaction takes place in the presence of glutamine and ATP through an activated phospho-Asp-tRNA(Asn) or phospho-Glu-tRNA(Gln). This chain is Aspartyl/glutamyl-tRNA(Asn/Gln) amidotransferase subunit B, found in Prochlorococcus marinus (strain MIT 9312).